The chain runs to 312 residues: Olfactory receptor 6X1 (312 aa).

At 1-23 (MRNGTVITEFILLGFPVIQGLQT) the chain is on the extracellular side. A glycan (N-linked (GlcNAc...) asparagine) is linked at asparagine 3. The chain crosses the membrane as a helical span at residues 24–44 (PLFIAIFLTYILTLAGNGLII). Residues 45–52 (ATVWAEPR) lie on the Cytoplasmic side of the membrane. The helical transmembrane segment at 53-73 (LQIPMYFFLCNLSFLEIWYTT) threads the bilayer. The Extracellular segment spans residues 74–97 (TVIPKLLGTFVVARTVICMSCCLL). Cysteines 95 and 187 form a disulfide. A helical transmembrane segment spans residues 98-118 (QAFFHFFVGTTEFLILTIMSF). The Cytoplasmic segment spans residues 119 to 137 (DRYLTICNPLHHPTIMTSK). The helical transmembrane segment at 138–158 (LCLQLALSSWVVGFTIVFCQT) threads the bilayer. Residues 159-195 (MLLIQLPFCGNNVISHFYCDVGPSLKAACIDTSILEL) are Extracellular-facing. The helical transmembrane segment at 196–215 (LGVIATILVIPGSLLFNMIS) threads the bilayer. The Cytoplasmic segment spans residues 216–235 (YIYILSAILRIPSATGHQKT). The helical transmembrane segment at 236-256 (FSTCASHLTVVSLLYGAVLFM) threads the bilayer. At 257 to 269 (YLRPTAHSSFKIN) the chain is on the extracellular side. Residues 270-290 (KVVSVLNTILTPLLNPFIYTI) form a helical membrane-spanning segment. Residues 291-312 (RNKEVKGALRKAMTCPKTGHAK) lie on the Cytoplasmic side of the membrane.

The protein belongs to the G-protein coupled receptor 1 family.

It is found in the cell membrane. Odorant receptor. The sequence is that of Olfactory receptor 6X1 (OR6X1) from Homo sapiens (Human).